The following is a 70-amino-acid chain: Probable U6 snRNA-associated Sm-like protein (70 aa).

The 68-residue stretch at 3-70 (DPFCFLKMYL…ILFVGPRLLL (68 aa)) folds into the Sm domain.

This sequence belongs to the snRNP Sm proteins family.

Its subcellular location is the nucleus. In terms of biological role, binds specifically to the 3'-terminal U-tract of U6 snRNA. In Encephalitozoon cuniculi (strain GB-M1) (Microsporidian parasite), this protein is Probable U6 snRNA-associated Sm-like protein.